The sequence spans 239 residues: Putative HTH-type transcriptional regulator YkgA (239 aa).

Positions 19–117 (QQLLEWIECN…GCSPREYRHR (99 aa)) constitute an HTH araC/xylS-type domain. 2 DNA-binding regions (H-T-H motif) span residues 36–57 (EDIA…RNFM) and 84–107 (MLDI…KKLF).

The chain is Putative HTH-type transcriptional regulator YkgA (ykgA) from Escherichia coli (strain K12).